The sequence spans 197 residues: 22.7 kDa class IV heat shock protein (197 aa).

A signal peptide spans 1–28; sequence MSLKPLNMLLVPFLLLILAADFPLKAKA. The sHSP domain maps to 68–184; sequence PSITLSHARV…GPRMVSIVEE (117 aa). The Prevents secretion from ER signature appears at 194–197; that stretch reads DELK.

Belongs to the small heat shock protein (HSP20) family. As to quaternary structure, forms oligomeric structures.

Its subcellular location is the endoplasmic reticulum lumen. In Pisum sativum (Garden pea), this protein is 22.7 kDa class IV heat shock protein (HSP22.7).